Reading from the N-terminus, the 327-residue chain is Undecaprenyl-phosphate 4-deoxy-4-formamido-L-arabinose transferase (327 aa).

The Cytoplasmic portion of the chain corresponds to 1–235; that stretch reads MFDAAPIKKV…TCLTTTPLRL (235 aa). The helical transmembrane segment at 236-256 threads the bilayer; the sequence is LSLLGSVIAIGGFSLSVLLIV. Topologically, residues 257 to 269 are periplasmic; that stretch reads LRLALGPQWAAEG. A helical membrane pass occupies residues 270–290; sequence VFMLFAVLFTFIGAQFIGMGL. Topologically, residues 291–327 are cytoplasmic; sequence LGEYIGRIYNDVRARPRYFVQQVIYPESTPFTEESHQ.

Belongs to the glycosyltransferase 2 family.

The protein resides in the cell inner membrane. It catalyses the reaction UDP-4-deoxy-4-formamido-beta-L-arabinose + di-trans,octa-cis-undecaprenyl phosphate = 4-deoxy-4-formamido-alpha-L-arabinopyranosyl di-trans,octa-cis-undecaprenyl phosphate + UDP. It participates in glycolipid biosynthesis; 4-amino-4-deoxy-alpha-L-arabinose undecaprenyl phosphate biosynthesis; 4-amino-4-deoxy-alpha-L-arabinose undecaprenyl phosphate from UDP-4-deoxy-4-formamido-beta-L-arabinose and undecaprenyl phosphate: step 1/2. The protein operates within bacterial outer membrane biogenesis; lipopolysaccharide biosynthesis. Its function is as follows. Catalyzes the transfer of 4-deoxy-4-formamido-L-arabinose from UDP to undecaprenyl phosphate. The modified arabinose is attached to lipid A and is required for resistance to polymyxin and cationic antimicrobial peptides. The polypeptide is Undecaprenyl-phosphate 4-deoxy-4-formamido-L-arabinose transferase (Salmonella agona (strain SL483)).